Reading from the N-terminus, the 259-residue chain is MTDLKASSLRALKLMDLTTLNDDDTDEKVIALCHQAKTPVGNTAAICIYPRFIPIARKTLKEQGTPEIRIATVTNFPHGNDDIDIALAETRAAIAYGADEVDVVFPYRALMAGNEQVGFDLVKACKEACAAANVLLKVIIETGELKDEALIRKASEISIKAGADFIKTSTGKVAVNATPESARIMMEVIRDMGVEKTVGFKPAGGVRTAEDAQKYLAIADELFGADWADARHYRFGASSLLASLLKALGHGDGKSASSY.

D102 functions as the Proton donor/acceptor in the catalytic mechanism. K167 functions as the Schiff-base intermediate with acetaldehyde in the catalytic mechanism. The active-site Proton donor/acceptor is K201.

The protein belongs to the DeoC/FbaB aldolase family. DeoC type 2 subfamily.

The protein resides in the cytoplasm. It carries out the reaction 2-deoxy-D-ribose 5-phosphate = D-glyceraldehyde 3-phosphate + acetaldehyde. It functions in the pathway carbohydrate degradation; 2-deoxy-D-ribose 1-phosphate degradation; D-glyceraldehyde 3-phosphate and acetaldehyde from 2-deoxy-alpha-D-ribose 1-phosphate: step 2/2. Its function is as follows. Catalyzes a reversible aldol reaction between acetaldehyde and D-glyceraldehyde 3-phosphate to generate 2-deoxy-D-ribose 5-phosphate. This chain is Deoxyribose-phosphate aldolase, found in Escherichia coli O45:K1 (strain S88 / ExPEC).